Reading from the N-terminus, the 448-residue chain is Probable glycine dehydrogenase (decarboxylating) subunit 1 (448 aa).

It belongs to the GcvP family. N-terminal subunit subfamily. The glycine cleavage system is composed of four proteins: P, T, L and H. In this organism, the P 'protein' is a heterodimer of two subunits.

It carries out the reaction N(6)-[(R)-lipoyl]-L-lysyl-[glycine-cleavage complex H protein] + glycine + H(+) = N(6)-[(R)-S(8)-aminomethyldihydrolipoyl]-L-lysyl-[glycine-cleavage complex H protein] + CO2. Its function is as follows. The glycine cleavage system catalyzes the degradation of glycine. The P protein binds the alpha-amino group of glycine through its pyridoxal phosphate cofactor; CO(2) is released and the remaining methylamine moiety is then transferred to the lipoamide cofactor of the H protein. The sequence is that of Probable glycine dehydrogenase (decarboxylating) subunit 1 from Staphylococcus carnosus (strain TM300).